The chain runs to 149 residues: MRMNKQIVVTDWIKEKPKLGSFLKLTLSSDERRILRGKRLTDCDQEIILQLPREGKLNDGDILSTNKSNFYVEIVAKKENLIEISSNSKIELIKTAYHLGNRHVELEIEEGILLTKSDYVIKNMLLNFKVNIKNTKKKFFPERGAHSHE.

The protein belongs to the UreE family.

It localises to the cytoplasm. Functionally, involved in urease metallocenter assembly. Binds nickel. Probably functions as a nickel donor during metallocenter assembly. The protein is Urease accessory protein UreE of Prochlorococcus marinus (strain MIT 9301).